The primary structure comprises 105 residues: Large ribosomal subunit protein eL36 (105 aa).

Residues 1–36 (MAQERSGIAVGLNKGHKTTPLNTPKTRISRSKGKAS) form a disordered region. Residues 27-36 (RISRSKGKAS) show a composition bias toward basic residues.

It belongs to the eukaryotic ribosomal protein eL36 family. Component of the large ribosomal subunit (LSU).

It localises to the cytoplasm. Functionally, component of the ribosome, a large ribonucleoprotein complex responsible for the synthesis of proteins in the cell. The small ribosomal subunit (SSU) binds messenger RNAs (mRNAs) and translates the encoded message by selecting cognate aminoacyl-transfer RNA (tRNA) molecules. The large subunit (LSU) contains the ribosomal catalytic site termed the peptidyl transferase center (PTC), which catalyzes the formation of peptide bonds, thereby polymerizing the amino acids delivered by tRNAs into a polypeptide chain. The nascent polypeptides leave the ribosome through a tunnel in the LSU and interact with protein factors that function in enzymatic processing, targeting, and the membrane insertion of nascent chains at the exit of the ribosomal tunnel. In Emericella nidulans (strain FGSC A4 / ATCC 38163 / CBS 112.46 / NRRL 194 / M139) (Aspergillus nidulans), this protein is Large ribosomal subunit protein eL36.